Consider the following 484-residue polypeptide: MAKRLLLTAALAATTLAAPVIEERQNCGSVWSQCGGQGWTGATCCASGSTCVAQNQWYSQCLPGSQVTTTAQAPSSTRTTTSSSSRPTSSSISTSAVNVPTTTTSAGASVTVPPGGGASSTASYSGNPFLGVQQWANSYYSSEVHTLAIPSLTGPMATKAAAVAKVPSFQWMDRNVTVDTLFSGTLADIRAANRAGANPPYAGIFVVYDLPDRDCAAAASNGEWAIADGGAAKYKAYIDRIRHHLVQYSDIRTILVIEPDSLANMVTNMNVPKCQGAANTYKELTVYALKQLNLPNVAMYLDAGHAGWLGWPANIGPAAELFAGIYKDAGRPTSLRGLATNVANYNGWSLSSAPSYTTPNPNFDEKRFVQAFSPLLTAAGFPAHFITDTGRSGKQPTGQLEWGHWCNAIGTGFGPRPTTDTGLDIEDAFVWIKPGGECDGTSDTTAARYDHHCGFADALKPAPEAGQWFQAYFEQLLTNANPPF.

The signal sequence occupies residues 1 to 17; the sequence is MAKRLLLTAALAATTLA. The 37-residue stretch at 26–62 folds into the CBM1 domain; it reads NCGSVWSQCGGQGWTGATCCASGSTCVAQNQWYSQCL. Disulfide bonds link cysteine 34–cysteine 51 and cysteine 45–cysteine 61. Positions 68–98 are disordered; it reads TTTAQAPSSTRTTTSSSSRPTSSSISTSAVN. Substrate-binding residues include tryptophan 171 and aspartate 173. N-linked (GlcNAc...) asparagine glycosylation occurs at asparagine 175. Positions 208–230 are substrate binding loop 1; the sequence is YDLPDRDCAAAASNGEWAIADGG. The active-site Proton donor is aspartate 260. 6 residues coordinate substrate: histidine 305, tryptophan 308, asparagine 344, tryptophan 405, lysine 433, and glutamate 437. Residues 431-469 form a substrate binding loop 2 region; sequence WIKPGGECDGTSDTTAARYDHHCGFADALKPAPEAGQWF. The active-site Proton acceptor is the aspartate 439.

The protein belongs to the glycosyl hydrolase 6 (cellulase B) family. Monomer. Post-translationally, both N- and O-glycosylated.

The protein localises to the secreted. It catalyses the reaction Hydrolysis of (1-&gt;4)-beta-D-glucosidic linkages in cellulose and cellotetraose, releasing cellobiose from the non-reducing ends of the chains.. In terms of biological role, exoglucanase that plays an important function in biomass degradation by catalyzing the hydrolysis of the non-reducing end beta-1,4-glucosidic linkages in cellulose and cellotetraose to release cellobiose. Hydrolyzes crystalline and amorphous cellulose but is inactive on hydroxyethyl cellulose, mannan, galactomannan, xyloglucan, arabinoxylan, arabinan, xylan, and pectin. The protein is 1,4-beta-D-glucan cellobiohydrolase CEL6A of Podospora anserina (strain S / ATCC MYA-4624 / DSM 980 / FGSC 10383) (Pleurage anserina).